Here is a 190-residue protein sequence, read N- to C-terminus: Threonylcarbamoyl-AMP synthase (190 aa).

Residues 7 to 190 (TGSIAAVVDL…ALTGELFRQG (184 aa)) form the YrdC-like domain.

This sequence belongs to the SUA5 family. TsaC subfamily.

It localises to the cytoplasm. The enzyme catalyses L-threonine + hydrogencarbonate + ATP = L-threonylcarbamoyladenylate + diphosphate + H2O. Functionally, required for the formation of a threonylcarbamoyl group on adenosine at position 37 (t(6)A37) in tRNAs that read codons beginning with adenine. Catalyzes the conversion of L-threonine, HCO(3)(-)/CO(2) and ATP to give threonylcarbamoyl-AMP (TC-AMP) as the acyladenylate intermediate, with the release of diphosphate. The sequence is that of Threonylcarbamoyl-AMP synthase from Salmonella paratyphi A (strain ATCC 9150 / SARB42).